We begin with the raw amino-acid sequence, 363 residues long: S-adenosylmethionine:tRNA ribosyltransferase-isomerase (363 aa).

Belongs to the QueA family. In terms of assembly, monomer.

The protein localises to the cytoplasm. It carries out the reaction 7-aminomethyl-7-carbaguanosine(34) in tRNA + S-adenosyl-L-methionine = epoxyqueuosine(34) in tRNA + adenine + L-methionine + 2 H(+). It functions in the pathway tRNA modification; tRNA-queuosine biosynthesis. Its function is as follows. Transfers and isomerizes the ribose moiety from AdoMet to the 7-aminomethyl group of 7-deazaguanine (preQ1-tRNA) to give epoxyqueuosine (oQ-tRNA). The polypeptide is S-adenosylmethionine:tRNA ribosyltransferase-isomerase (Haemophilus influenzae (strain PittGG)).